A 75-amino-acid chain; its full sequence is Beta-defensin 30 (75 aa).

An N-terminal signal peptide occupies residues 1-22 (MGSLQLILVLFVLLSDVPPVRS). 3 disulfides stabilise this stretch: C35-C62, C42-C56, and C46-C63.

The protein belongs to the beta-defensin family.

It is found in the secreted. In terms of biological role, has antibacterial activity. The chain is Beta-defensin 30 (Defb30) from Rattus norvegicus (Rat).